The sequence spans 461 residues: Photosystem II CP43 reaction center protein (461 aa).

Over 1–48 the chain is Cytoplasmic; sequence MVTLSSNSIFATNRDQESSGFAWWAGNARLINLSGKLLGAHVAHAGLI. A helical transmembrane segment spans residues 49-71; the sequence is VFWAGAMTLFELAHFIPEKPMYE. The Lumenal segment spans residues 72-111; it reads QGLILIPHIATLGWGVGPGGEVVDTFPFFVVGVVHLISSA. A helical membrane pass occupies residues 112 to 133; sequence VLGFGGVYHAIRGPETLEEYSS. Residues 134–155 are Cytoplasmic-facing; the sequence is FFGYDWKDKNKMTTILGFHLIV. A helical transmembrane segment spans residues 156 to 178; it reads LGIGALLLVAKAMFFGGLYDTWA. The Lumenal segment spans residues 179-232; it reads PGGGDVRVITNPTLDPRVIFGYLLKSPFGGEGWIVSVNNLEDVVGGHIWIGLIC. The helical transmembrane segment at 233 to 253 threads the bilayer; it reads IAGGIWHILTTPFGWARRAFI. The Cytoplasmic portion of the chain corresponds to 254-268; sequence WSGEAYLSYSLGALS. The helical transmembrane segment at 269-289 threads the bilayer; it reads MMGFIATCFVWFNNTVYPSEF. Residues 290–424 lie on the Lumenal side of the membrane; it reads YGPTGPEASQ…ATSHFVLAFF (135 aa). Residue Glu-355 participates in [CaMn4O5] cluster binding. A helical transmembrane segment spans residues 425 to 449; it reads FLVGHLWHAGRARAAAAGFEKGIDR. Residues 450–461 lie on the Cytoplasmic side of the membrane; the sequence is ESEPVLSMPSLD.

As to quaternary structure, PSII is composed of 1 copy each of membrane proteins PsbA, PsbB, PsbC, PsbD, PsbE, PsbF, PsbH, PsbI, PsbJ, PsbK, PsbL, PsbM, PsbT, PsbX, PsbY, PsbZ, Psb30/Ycf12, peripheral proteins PsbO, CyanoQ (PsbQ), PsbU, PsbV and a large number of cofactors. It forms dimeric complexes. Part of a photosystem II (PSII) assembly intermediate complex PSII-I; crystallized from a strain deleted of psbJ, it forms monomeric PSII before addition of the oxygen evolving complex. PSII-I includes 3 assembly factors not found in mature PSII (Psb27, Psb28 and Psb34), and CP43 (this protein) is not in its mature conformation. Binds multiple chlorophylls and provides some of the ligands for the Ca-4Mn-5O cluster of the oxygen-evolving complex. It may also provide a ligand for a Cl- that is required for oxygen evolution. PSII binds additional chlorophylls, carotenoids and specific lipids. is required as a cofactor.

It is found in the cellular thylakoid membrane. In terms of biological role, one of the components of the core complex of photosystem II (PSII). It binds chlorophyll and helps catalyze the primary light-induced photochemical processes of PSII. PSII is a light-driven water:plastoquinone oxidoreductase, using light energy to abstract electrons from H(2)O, generating O(2) and a proton gradient subsequently used for ATP formation. The protein is Photosystem II CP43 reaction center protein of Thermosynechococcus vestitus (strain NIES-2133 / IAM M-273 / BP-1).